The chain runs to 208 residues: Putative 3-methyladenine DNA glycosylase (208 aa).

The protein belongs to the DNA glycosylase MPG family.

In Prosthecochloris aestuarii (strain DSM 271 / SK 413), this protein is Putative 3-methyladenine DNA glycosylase.